A 293-amino-acid chain; its full sequence is N-acetylneuraminate lyase (293 aa).

Aceneuramate is bound by residues serine 48 and serine 49. Tyrosine 137 serves as the catalytic Proton donor. The Schiff-base intermediate with substrate role is filled by lysine 165. Threonine 167, glycine 189, aspartate 191, glutamate 192, and serine 208 together coordinate aceneuramate.

Belongs to the DapA family. NanA subfamily. In terms of assembly, homotetramer.

It localises to the cytoplasm. The catalysed reaction is aceneuramate = aldehydo-N-acetyl-D-mannosamine + pyruvate. It participates in amino-sugar metabolism; N-acetylneuraminate degradation; D-fructose 6-phosphate from N-acetylneuraminate: step 1/5. Catalyzes the reversible aldol cleavage of N-acetylneuraminic acid (sialic acid; Neu5Ac) to form pyruvate and N-acetylmannosamine (ManNAc) via a Schiff base intermediate. The protein is N-acetylneuraminate lyase of Staphylococcus aureus (strain MRSA252).